The chain runs to 403 residues: Keratin, type I cytoskeletal 19 (403 aa).

Residues methionine 1–asparagine 82 are head. Arginine 7 is subject to Omega-N-methylarginine. At serine 14 the chain carries Phosphoserine. Arginine 24 bears the Asymmetric dimethylarginine; alternate mark. An Omega-N-methylarginine; alternate modification is found at arginine 24. Serine 27 carries the phosphoserine modification. An Omega-N-methylarginine modification is found at arginine 32. Residues serine 35 and serine 40 each carry the phosphoserine modification. Omega-N-methylarginine is present on residues arginine 43 and arginine 51. Serine 57 and serine 67 each carry phosphoserine. Residues glutamate 83 to tryptophan 118 are coil 1A. The IF rod domain maps to glutamate 83–tyrosine 394. Positions tyrosine 119–threonine 136 are linker 1. The coil 1B stretch occupies residues isoleucine 137–leucine 228. Residues arginine 229–isoleucine 251 are linker 12. Residues aspartate 247–histidine 393 are necessary for interaction with PNN. The tract at residues leucine 252–glutamine 390 is coil 2. Threonine 326 is modified (phosphothreonine). The segment at glutamate 391–leucine 403 is rod-like helical tail. A Phosphotyrosine modification is found at tyrosine 394. A Phosphoserine modification is found at serine 398.

Belongs to the intermediate filament family. As to quaternary structure, heterotetramer of two type I and two type II keratins. Interacts with PNN. Interacts with the actin-binding domain of DMD. As to expression, expressed in brain, heart, skin and in costameres of myoplasm at the sarcolemmal membrane in skeletal and cardiac muscle fibers. Undifferentiated gonads and somatic cells of ovarian cords throughout the fetal ovary development.

Functionally, involved in the organization of myofibers. Together with KRT8, helps to link the contractile apparatus to dystrophin at the costameres of striated muscle. This chain is Keratin, type I cytoskeletal 19 (Krt19), found in Rattus norvegicus (Rat).